Reading from the N-terminus, the 517-residue chain is BTB/POZ domain-containing protein At3g49900 (517 aa).

Positions 28 to 37 (SSSSSSLSLS) are enriched in low complexity. The interval 28–49 (SSSSSSLSLSPKQPINLSSSPS) is disordered. Over residues 38-49 (PKQPINLSSSPS) the composition is skewed to polar residues. A BTB domain is found at 67–130 (PDVFVNVGGT…CYGAHIELTP (64 aa)). The NPH3 domain occupies 224–307 (LPAGDFNVVA…VRAMLQEQLN (84 aa)). Residues 409-456 (ARSASFHCVHQPSNVNKTQRGDRGSVSNLSTTYRRRRASPPQAQPQKS) are disordered.

This sequence belongs to the NPH3 family.

It participates in protein modification; protein ubiquitination. In terms of biological role, may act as a substrate-specific adapter of an E3 ubiquitin-protein ligase complex (CUL3-RBX1-BTB) which mediates the ubiquitination and subsequent proteasomal degradation of target proteins. This chain is BTB/POZ domain-containing protein At3g49900, found in Arabidopsis thaliana (Mouse-ear cress).